Consider the following 377-residue polypeptide: Chaperone protein DnaJ (377 aa).

Positions 5 to 70 (DFYETLGVSK…QKRAAYDRFG (66 aa)) constitute a J domain. The CR-type zinc-finger motif lies at 138–216 (GKTAQIRVPT…CHGQGRVTEE (79 aa)). Zn(2+) contacts are provided by Cys151, Cys154, Cys168, Cys171, Cys190, Cys193, Cys204, and Cys207. 4 CXXCXGXG motif repeats span residues 151 to 158 (CDVCSGSG), 168 to 175 (CATCQGSG), 190 to 197 (CPTCHGRG), and 204 to 211 (CGKCHGQG).

It belongs to the DnaJ family. Homodimer. The cofactor is Zn(2+).

It is found in the cytoplasm. Participates actively in the response to hyperosmotic and heat shock by preventing the aggregation of stress-denatured proteins and by disaggregating proteins, also in an autonomous, DnaK-independent fashion. Unfolded proteins bind initially to DnaJ; upon interaction with the DnaJ-bound protein, DnaK hydrolyzes its bound ATP, resulting in the formation of a stable complex. GrpE releases ADP from DnaK; ATP binding to DnaK triggers the release of the substrate protein, thus completing the reaction cycle. Several rounds of ATP-dependent interactions between DnaJ, DnaK and GrpE are required for fully efficient folding. Also involved, together with DnaK and GrpE, in the DNA replication of plasmids through activation of initiation proteins. In Agrobacterium fabrum (strain C58 / ATCC 33970) (Agrobacterium tumefaciens (strain C58)), this protein is Chaperone protein DnaJ.